The sequence spans 322 residues: UV DNA damage endonuclease (322 aa).

It belongs to the uve1/UvsE family.

Component in a DNA repair pathway. Removal of UV LIGHT damaged nucleotides. Recognizes pyrimidine dimers and cleave a phosphodiester bond immediately 5' to the lesion. This Halalkalibacterium halodurans (strain ATCC BAA-125 / DSM 18197 / FERM 7344 / JCM 9153 / C-125) (Bacillus halodurans) protein is UV DNA damage endonuclease.